The following is a 194-amino-acid chain: Ribonuclease HII (194 aa).

The RNase H type-2 domain maps to 3–193; that stretch reads ILTAGVDEAG…VRNLFAQQAL (191 aa). A divalent metal cation contacts are provided by D9, E10, and D101.

The protein belongs to the RNase HII family. Mn(2+) serves as cofactor. Mg(2+) is required as a cofactor.

The protein localises to the cytoplasm. It catalyses the reaction Endonucleolytic cleavage to 5'-phosphomonoester.. Functionally, endonuclease that specifically degrades the RNA of RNA-DNA hybrids. This chain is Ribonuclease HII, found in Neisseria meningitidis serogroup C / serotype 2a (strain ATCC 700532 / DSM 15464 / FAM18).